A 113-amino-acid chain; its full sequence is Cytochrome c oxidase subunit 7A2-like, mitochondrial (113 aa).

The transit peptide at 1–54 (MYYKFSSFTQKLAGAWASEAYTPQGLKPVSTEAPPIIFATPTKLTSSVTAYDYS) directs the protein to the mitochondrion. At lysine 68 the chain carries N6-acetyllysine. Residues 81–106 (PDQMLYRTTMALTLGGTIYCLIALYM) traverse the membrane as a helical segment.

The protein belongs to the cytochrome c oxidase VIIa family. In terms of assembly, interacts with the mitochondrial respiratory complexes III (CIII) and IV (CIV), promoting their association.

It localises to the mitochondrion inner membrane. The protein operates within energy metabolism; oxidative phosphorylation. Assembly factor that mediates the formation of some mitochondrial respiratory supercomplexes (respirasomes), thereby promoting oxidative phosphorylation and energy metabolism. Acts as a molecular adapter that associates with both mitochondrial respiratory complexes III (CIII) and IV (CIV), promoting their association. Mediates the formation of various mitochondrial respiratory supercomplexes, such as MCIII(2)IV(2), composed of two CIII and two CIV, and the CS-respirasome (MCI(1)III(2)IV(2)), composed of one CI, two CIII and two CIV. Not involved in the formation of the canonical respirasome (MCI(1)III(2)IV(1)), composed of one CI, two CIII and one CIV. The formation of different respirasomes is important for cell adaptation to oxygen conditions and prevent metabolic exhaustion: supercomplexes mediated by COX7A2L/SCAF1 are required to maintain oxidative phosphorylation upon low oxygen conditions and promote metabolic rewiring toward glycolysis. The sequence is that of Cytochrome c oxidase subunit 7A2-like, mitochondrial from Mus musculus (Mouse).